The primary structure comprises 785 residues: Endonuclease MutS2 (785 aa).

G334–T341 is a binding site for ATP. Residues L710–K785 form the Smr domain.

The protein belongs to the DNA mismatch repair MutS family. MutS2 subfamily. Homodimer. Binds to stalled ribosomes, contacting rRNA.

In terms of biological role, endonuclease that is involved in the suppression of homologous recombination and thus may have a key role in the control of bacterial genetic diversity. Its function is as follows. Acts as a ribosome collision sensor, splitting the ribosome into its 2 subunits. Detects stalled/collided 70S ribosomes which it binds and splits by an ATP-hydrolysis driven conformational change. Acts upstream of the ribosome quality control system (RQC), a ribosome-associated complex that mediates the extraction of incompletely synthesized nascent chains from stalled ribosomes and their subsequent degradation. Probably generates substrates for RQC. The chain is Endonuclease MutS2 from Pediococcus pentosaceus (strain ATCC 25745 / CCUG 21536 / LMG 10740 / 183-1w).